Here is a 228-residue protein sequence, read N- to C-terminus: Cytochrome c oxidase subunit 2 (228 aa).

The Mitochondrial intermembrane portion of the chain corresponds to 1–26; sequence MSTWANLGLQDSASPLMEQLIFFHDH. A helical transmembrane segment spans residues 27 to 48; that stretch reads ALLILVMITVLVGYLMFMLFFN. Topologically, residues 49–62 are mitochondrial matrix; it reads NYVNRFLLHGQLIE. A helical transmembrane segment spans residues 63–82; that stretch reads MIWTILPAIILLFIALPSLR. The Mitochondrial intermembrane portion of the chain corresponds to 83–228; sequence LLYLLDEINE…FIKWISSNNS (146 aa). Residues histidine 161, cysteine 196, glutamate 198, cysteine 200, histidine 204, and methionine 207 each coordinate Cu cation. Glutamate 198 serves as a coordination point for Mg(2+).

It belongs to the cytochrome c oxidase subunit 2 family. Component of the cytochrome c oxidase (complex IV, CIV), a multisubunit enzyme composed of a catalytic core of 3 subunits and several supernumerary subunits. The complex exists as a monomer or a dimer and forms supercomplexes (SCs) in the inner mitochondrial membrane with ubiquinol-cytochrome c oxidoreductase (cytochrome b-c1 complex, complex III, CIII). Cu cation serves as cofactor.

It localises to the mitochondrion inner membrane. It catalyses the reaction 4 Fe(II)-[cytochrome c] + O2 + 8 H(+)(in) = 4 Fe(III)-[cytochrome c] + 2 H2O + 4 H(+)(out). Component of the cytochrome c oxidase, the last enzyme in the mitochondrial electron transport chain which drives oxidative phosphorylation. The respiratory chain contains 3 multisubunit complexes succinate dehydrogenase (complex II, CII), ubiquinol-cytochrome c oxidoreductase (cytochrome b-c1 complex, complex III, CIII) and cytochrome c oxidase (complex IV, CIV), that cooperate to transfer electrons derived from NADH and succinate to molecular oxygen, creating an electrochemical gradient over the inner membrane that drives transmembrane transport and the ATP synthase. Cytochrome c oxidase is the component of the respiratory chain that catalyzes the reduction of oxygen to water. Electrons originating from reduced cytochrome c in the intermembrane space (IMS) are transferred via the dinuclear copper A center (CU(A)) of subunit 2 and heme A of subunit 1 to the active site in subunit 1, a binuclear center (BNC) formed by heme A3 and copper B (CU(B)). The BNC reduces molecular oxygen to 2 water molecules using 4 electrons from cytochrome c in the IMS and 4 protons from the mitochondrial matrix. This Drosophila yakuba (Fruit fly) protein is Cytochrome c oxidase subunit 2 (mt:CoII).